The following is a 163-amino-acid chain: Nucleotide-binding protein GTNG_0630 (163 aa).

It belongs to the YajQ family.

In terms of biological role, nucleotide-binding protein. This Geobacillus thermodenitrificans (strain NG80-2) protein is Nucleotide-binding protein GTNG_0630.